The chain runs to 141 residues: Hemoglobin subunit alpha-A (141 aa).

The Globin domain maps to 1–141 (VLSAADKTNV…VGAVLTAKYR (141 aa)). His58 contributes to the O2 binding site. Residue His87 participates in heme b binding.

It belongs to the globin family. Heterotetramer of two alpha chains and two beta chains. In terms of tissue distribution, red blood cells.

Involved in oxygen transport from the lung to the various peripheral tissues. This is Hemoglobin subunit alpha-A (HBAA) from Cygnus olor (Mute swan).